Reading from the N-terminus, the 3630-residue chain is Trimeric autotransporter adhesin AtaA (3630 aa).

The N-terminal stretch at 1 to 23 (MNKIYKVIWNATLLAWVAVSELA) is a signal peptide. Positions 24 to 3487 (KGKTKSTTSK…TNQAVVNYLG (3464 aa)) are surface exposed passenger domain. Residues 108 to 315 (SIAIGENAQG…ASDAVTVAQL (208 aa)) are N-terminal YadA-like head. Residues 316–2904 (DKAYDDTNGR…GRAATEEQLK (2589 aa)) are N-terminal stalk. The segment at 2905-3169 (AVITSNITEV…DSDAVNVAQL (265 aa)) is C-terminal YadA-like head. The C-terminal stalk stretch occupies residues 3170-3561 (KAVGNQVVTT…DVEKKANAGI (392 aa)). The outer membrane translocation of the passenger domain stretch occupies residues 3539 to 3574 (LDNAFRITNNRIDDVEKKANAGIAAAMALESAPYVP). 4 beta stranded membrane passes run 3575-3585 (GKYTYAAGAAY), 3589-3599 (ENAVGVTLRKT), 3608-3614 (TGGVAAA), and 3618-3629 (DASVRIGISGVI). Positions 3575–3630 (GKYTYAAGAAYHGGENAVGVTLRKTADNGRWSITGGVAAASQGDASVRIGISGVID) are translocator domain.

The protein belongs to the autotransporter-2 (AT-2) (TC 1.B.40) family. In terms of assembly, homotrimer. Interacts with TpgA.

The protein localises to the cell surface. The protein resides in the cell outer membrane. Functionally, responsible for autoagglutination, and for adhesion to abiotic and biotic surfaces such as polystyrene (PS), type I collagen, polypropylene (PP), polyvinylchloride (PVC), glass and stainless steel (SS). Adhesion is much stronger than that mediated by Yersinia YadA in a comparative assay. Confers autoagglutination and binding to PS, type I collagen, PP, PVC, glass and SS upon expression in Acinetobacter baylyi strain ADP1. Involved in rapid, irreversible adherence to polyurethane. Forms an unusual biofilm. An extended, surface exposed fiber binds to quartz crystals, PS and glass. It can be removed by washing in distilled water. The chain is Trimeric autotransporter adhesin AtaA from Acinetobacter sp. (strain Tol 5).